The chain runs to 269 residues: Undecaprenyl-diphosphatase (269 aa).

8 helical membrane passes run 1-21 (MDIMHAAVLGILQGLTEILPI), 40-59 (GLTFDVGLHVGTLIALCVYF), 87-107 (FFIIAGTVPAAIAGKTLEKPI), 117-137 (LIALLLIAFGLLLALADTTGP), 147-166 (LRGALLIGLAQCLALIPGVS), 188-208 (FSFLLSLPIVAGAGILKMGEL), 220-240 (PLLAGMATSAVSGYLGVALLL), and 248-268 (LYPFVWYRLLAGGAVLAYLFA).

It belongs to the UppP family.

The protein resides in the cell inner membrane. It catalyses the reaction di-trans,octa-cis-undecaprenyl diphosphate + H2O = di-trans,octa-cis-undecaprenyl phosphate + phosphate + H(+). Its function is as follows. Catalyzes the dephosphorylation of undecaprenyl diphosphate (UPP). Confers resistance to bacitracin. The polypeptide is Undecaprenyl-diphosphatase (Geobacter sulfurreducens (strain ATCC 51573 / DSM 12127 / PCA)).